A 141-amino-acid polypeptide reads, in one-letter code: Ribosome-binding factor A (141 aa).

A disordered region spans residues 120 to 141 (DEALRAQSAGARPAGDEDPYKP).

The protein belongs to the RbfA family. As to quaternary structure, monomer. Binds 30S ribosomal subunits, but not 50S ribosomal subunits or 70S ribosomes.

The protein resides in the cytoplasm. One of several proteins that assist in the late maturation steps of the functional core of the 30S ribosomal subunit. Associates with free 30S ribosomal subunits (but not with 30S subunits that are part of 70S ribosomes or polysomes). Required for efficient processing of 16S rRNA. May interact with the 5'-terminal helix region of 16S rRNA. The sequence is that of Ribosome-binding factor A from Corynebacterium jeikeium (strain K411).